The sequence spans 814 residues: Protein ADP-ribosyltransferase PARP3 (814 aa).

2 stretches are compositionally biased toward basic and acidic residues: residues 1-19 (MKVHETRSHAHMSGDEQKG) and 27-48 (EGKLPESEQSQKKAKPENDDGR). The interval 1-52 (MKVHETRSHAHMSGDEQKGNLRKHKAEGKLPESEQSQKKAKPENDDGRSVNG) is disordered. Residues 38–186 (KKAKPENDDG…KRELGSADKP (149 aa)) enclose the PADR1 zinc-binding domain. The tract at residues 105–150 (GALAKCPLCGGTLICDNEKRFVCGGEISEWCSCVFSTKDPPRKEEP) is zinc ribbon. Zn(2+) is bound by residues Cys-110, Cys-113, Cys-127, and Cys-137. 2 TPR repeats span residues 182 to 215 (SADKPFVGMMISLMGRLTRTHQYWKKKIERNGGK) and 277 to 310 (DLSVEGKGIPWDKQDPSEEAIESFSAELKMYGKR). The region spanning 187–274 (FVGMMISLMG…EAQPLEAYDV (88 aa)) is the BRCT domain. Positions 322 to 422 (GGKIFEKDGL…KKIQKKPHKF (101 aa)) constitute a WGR domain. Residues 449-568 (HCKLDSFVAN…DINTASRLIG (120 aa)) enclose the PARP alpha-helical domain. The region spanning 577-808 (DPLSDRYKKL…VKYEEKGTEI (232 aa)) is the PARP catalytic domain.

It belongs to the ARTD/PARP family.

It is found in the nucleus. The enzyme catalyses L-aspartyl-[protein] + NAD(+) = 4-O-(ADP-D-ribosyl)-L-aspartyl-[protein] + nicotinamide. It carries out the reaction L-glutamyl-[protein] + NAD(+) = 5-O-(ADP-D-ribosyl)-L-glutamyl-[protein] + nicotinamide. Involved in the base excision repair (BER) pathway, by catalyzing the poly(ADP-ribosyl)ation of a limited number of acceptor proteins involved in chromatin architecture and in DNA metabolism. This modification follows DNA damages and appears as an obligatory step in a detection/signaling pathway leading to the reparation of DNA strand breaks. The polypeptide is Protein ADP-ribosyltransferase PARP3 (PARP3) (Arabidopsis thaliana (Mouse-ear cress)).